The primary structure comprises 115 residues: U3-lycotoxin-Ls1k (115 aa).

The first 20 residues, 1 to 20 (MKSVLLFGVLLVTLFSYSSA), serve as a signal peptide directing secretion. Positions 21-44 (EMLDDFDQADEDELLSLIEKEEAR) are excised as a propeptide. Intrachain disulfides connect cysteine 48-cysteine 63, cysteine 55-cysteine 72, cysteine 62-cysteine 87, and cysteine 74-cysteine 85.

Belongs to the neurotoxin 19 (CSTX) family. 01 subfamily. Expressed by the venom gland.

The protein resides in the secreted. The chain is U3-lycotoxin-Ls1k from Lycosa singoriensis (Wolf spider).